We begin with the raw amino-acid sequence, 491 residues long: FAD-dependent monooxygenase idtM (491 aa).

Residues E34, G48, R107, D307, and A320 each contribute to the FAD site. The helical transmembrane segment at 448–468 (ILSLVYVVAGLAMMYMSIYLV) threads the bilayer.

Belongs to the paxM FAD-dependent monooxygenase family. FAD is required as a cofactor.

The protein localises to the membrane. It participates in secondary metabolite biosynthesis. Its function is as follows. FAD-dependent monooxygenase; part of the gene cluster that mediates the biosynthesis of paspalitrems, indole-diterpene (IDT) mycotoxins that are potent tremorgens in mammals. The geranylgeranyl diphosphate (GGPP) synthase idtG is proposed to catalyze the first step in IDT biosynthesis via catalysis of a series of iterative condensations of isopentenyl diphosphate (IPP) with dimethylallyl diphosphate (DMAPP), geranyl diphosphate (GPP), and farnesyl diphosphate (FPP), to form GGPP. Condensation of indole-3-glycerol phosphate with GGPP by the prenyltransferase idtC then forms 3-geranylgeranylindole (3-GGI). Epoxidation of the two terminal alkenes of the geranylgeranyl moiety by the FAD-dependent monooxygenase idtM, and cyclization by the terpene cyclase idtB then leads to the production of paspaline. The cytochrome P450 monooxygenase idtP then catalyzes oxidative elimination of the pendant methyl group at C-12 of paspaline and generates the C-10 ketone to yield 13-desoxypaxilline. The cytochrome P450 monooxygenase idtQ may catalyze the C-13 oxidation of 13-desoxypaxilline to afford paxilline. Considering that both paspalicine and paxilline were detected in C.paspali, idtQ also catalyzes the formation of paspalinine from 13-desoxypaxilline via paspalicine as an intermediate. Finally, the alpha-prenyltransferase idtF prenylates paspalinine at the C-20 or the C-21 positions to yield paspalitrems A and C, respectively. The hydroxylation of paspalitrem A at C-32 by a still unknown oxidase affords paspalitrem B. The polypeptide is FAD-dependent monooxygenase idtM (Claviceps paspali (Rye ergot fungus)).